The following is a 699-amino-acid chain: Bifunctional protein GAL10 (699 aa).

The interval 1 to 357 is galactowaldenase; it reads MTAQLQSEST…TTENPFGYQL (357 aa). 13-44 is an NAD(+) binding site; sequence IVLVTGGAGYIGSHTVVELIENGYDCVVADNL. The mutarotase stretch occupies residues 358 to 699; sequence RGVEARFSAE…YGSKIVYRFS (342 aa). His-537 acts as the For mutarotase activity in catalysis. Ser-562 carries the post-translational modification Phosphoserine.

In the N-terminal section; belongs to the NAD(P)-dependent epimerase/dehydratase family. The protein in the C-terminal section; belongs to the aldose epimerase family. NAD(+) serves as cofactor.

The catalysed reaction is UDP-alpha-D-glucose = UDP-alpha-D-galactose. The enzyme catalyses alpha-D-glucose = beta-D-glucose. It participates in carbohydrate metabolism; galactose metabolism. The protein operates within carbohydrate metabolism; hexose metabolism. Functionally, mutarotase converts alpha-aldose to the beta-anomer. It is active on D-glucose, L-arabinose, D-xylose, D-galactose, maltose and lactose. The sequence is that of Bifunctional protein GAL10 (GAL10) from Saccharomyces cerevisiae (strain ATCC 204508 / S288c) (Baker's yeast).